We begin with the raw amino-acid sequence, 228 residues long: Pyridoxamine 5'-phosphate oxidase (228 aa).

Pyridoxal 5'-phosphate is bound at residue 20–23 (QYDK). K29 is covalently cross-linked (Glycyl lysine isopeptide (Lys-Gly) (interchain with G-Cter in ubiquitin)). 73 to 76 (RILL) contributes to the FMN binding site. K78 is a pyridoxal 5'-phosphate binding site. FMN-binding positions include 88-89 (YS), 95-96 (RK), and Q118. Pyridoxal 5'-phosphate contacts are provided by Y136, R140, and S144. FMN contacts are provided by residues 153–154 (QS) and W199. 205–207 (RLH) serves as a coordination point for pyridoxal 5'-phosphate. Residue R209 coordinates FMN.

It belongs to the pyridoxamine 5'-phosphate oxidase family. As to quaternary structure, homodimer. FMN is required as a cofactor.

The protein resides in the mitochondrion intermembrane space. It catalyses the reaction pyridoxamine 5'-phosphate + O2 + H2O = pyridoxal 5'-phosphate + H2O2 + NH4(+). The catalysed reaction is pyridoxine 5'-phosphate + O2 = pyridoxal 5'-phosphate + H2O2. Its pathway is cofactor metabolism; pyridoxal 5'-phosphate salvage; pyridoxal 5'-phosphate from pyridoxamine 5'-phosphate: step 1/1. The protein operates within cofactor metabolism; pyridoxal 5'-phosphate salvage; pyridoxal 5'-phosphate from pyridoxine 5'-phosphate: step 1/1. In terms of biological role, catalyzes the oxidation of either pyridoxine 5'-phosphate (PNP) or pyridoxamine 5'-phosphate (PMP) into pyridoxal 5'-phosphate (PLP). This Saccharomyces cerevisiae (strain ATCC 204508 / S288c) (Baker's yeast) protein is Pyridoxamine 5'-phosphate oxidase (PDX3).